Consider the following 1067-residue polypeptide: DNA-directed RNA polymerase subunit beta (1067 aa).

The protein belongs to the RNA polymerase beta chain family. In terms of assembly, in plastids the minimal PEP RNA polymerase catalytic core is composed of four subunits: alpha, beta, beta', and beta''. When a (nuclear-encoded) sigma factor is associated with the core the holoenzyme is formed, which can initiate transcription.

The protein localises to the plastid. It localises to the chloroplast. The catalysed reaction is RNA(n) + a ribonucleoside 5'-triphosphate = RNA(n+1) + diphosphate. In terms of biological role, DNA-dependent RNA polymerase catalyzes the transcription of DNA into RNA using the four ribonucleoside triphosphates as substrates. The polypeptide is DNA-directed RNA polymerase subunit beta (Ipomoea purpurea (Common morning glory)).